A 295-amino-acid polypeptide reads, in one-letter code: Probable endonuclease 4 (295 aa).

His78, His118, Glu154, Asp188, His191, His225, Asp238, His240, and Glu270 together coordinate Zn(2+).

It belongs to the AP endonuclease 2 family. The cofactor is Zn(2+).

The enzyme catalyses Endonucleolytic cleavage to 5'-phosphooligonucleotide end-products.. Functionally, endonuclease IV plays a role in DNA repair. It cleaves phosphodiester bonds at apurinic or apyrimidinic (AP) sites, generating a 3'-hydroxyl group and a 5'-terminal sugar phosphate. This chain is Probable endonuclease 4, found in Vibrio parahaemolyticus serotype O3:K6 (strain RIMD 2210633).